A 650-amino-acid polypeptide reads, in one-letter code: p-hydroxybenzoic acid efflux pump subunit AaeB (650 aa).

11 consecutive transmembrane segments (helical) span residues phenylalanine 7–leucine 27, tryptophan 32–proline 52, glycine 61–alanine 81, valine 87–isoleucine 107, leucine 115–leucine 135, glutamate 148–isoleucine 168, leucine 365–isoleucine 385, phenylalanine 402–proline 422, glutamine 426–isoleucine 446, glutamine 450–methionine 470, and isoleucine 478–isoleucine 498.

Belongs to the aromatic acid exporter ArAE (TC 2.A.85) family.

Its subcellular location is the cell inner membrane. Forms an efflux pump with AaeA. Could function as a metabolic relief valve, allowing to eliminate certain compounds when they accumulate to high levels in the cell. The polypeptide is p-hydroxybenzoic acid efflux pump subunit AaeB (Pantoea ananatis (strain LMG 20103)).